A 226-amino-acid polypeptide reads, in one-letter code: Ribose-5-phosphate isomerase A (226 aa).

Residues 33–36, 86–89, and 99–102 each bind substrate; these read TGST, DGAD, and KGGG. Catalysis depends on E108, which acts as the Proton acceptor. K126 serves as a coordination point for substrate.

Belongs to the ribose 5-phosphate isomerase family. As to quaternary structure, homodimer.

The catalysed reaction is aldehydo-D-ribose 5-phosphate = D-ribulose 5-phosphate. It participates in carbohydrate degradation; pentose phosphate pathway; D-ribose 5-phosphate from D-ribulose 5-phosphate (non-oxidative stage): step 1/1. Functionally, catalyzes the reversible conversion of ribose-5-phosphate to ribulose 5-phosphate. The protein is Ribose-5-phosphate isomerase A of Bordetella pertussis (strain Tohama I / ATCC BAA-589 / NCTC 13251).